A 770-amino-acid chain; its full sequence is Transferrin receptor protein 1 (770 aa).

Topologically, residues 1-70 are cytoplasmic; that stretch reads MMDQARSAFS…KPKRCNGFIC (70 aa). The interval 1-70 is mediates interaction with SH3BP4; the sequence is MMDQARSAFS…KPKRCNGFIC (70 aa). Phosphoserine is present on residues Ser-10 and Ser-19. Tyr-20 carries the phosphotyrosine modification. Residues 20–23 carry the Endocytosis signal motif; the sequence is YTRF. Phosphothreonine is present on Thr-21. A Phosphoserine modification is found at Ser-24. A Stop-transfer sequence motif is present at residues 61–64; that stretch reads KPKR. 2 S-palmitoyl cysteine lipidation sites follow: Cys-65 and Cys-70. A helical; Signal-anchor for type II membrane protein membrane pass occupies residues 71–90; it reads YGTIAVVLFFLIGFMIGYLG. Residues 91–770 lie on the Extracellular side of the membrane; that stretch reads YCKRVEPKAG…GDIWDIDNEF (680 aa). The interval 102 to 122 is disordered; it reads ERPTGTEALGTERTEPSETEE. The O-linked (GalNAc...) threonine glycan is linked to Thr-107. In terms of domain architecture, PA spans 233-323; sequence SKATTVTGRL…GTGDPYTPGF (91 aa). N-linked (GlcNAc...) asparagine glycans are attached at residues Asn-261, Asn-327, and Asn-384. The tract at residues 579–770 is ligand-binding; the sequence is TMDLYENLNQ…GDIWDIDNEF (192 aa). Residues 656–658 carry the Cell attachment site motif; it reads RGD. Asn-732 and Asn-737 each carry an N-linked (GlcNAc...) asparagine glycan.

It belongs to the peptidase M28 family. M28B subfamily. Homodimer; disulfide-linked. Binds one transferrin molecule per subunit. Interacts with SH3BP4. Interacts with STEAP3; facilitates TFRC endocytosis in erythroid precursor cells. Post-translationally, stearoylated by ZDHHC6 which inhibits TFRC-mediated activation of the JNK pathway and promotes mitochondrial fragmentation. Stearoylation does not affect iron uptake. In terms of processing, N- and O-glycosylated, phosphorylated and palmitoylated.

The protein resides in the cell membrane. It localises to the melanosome. Cellular uptake of iron occurs via receptor-mediated endocytosis of ligand-occupied transferrin receptor into specialized endosomes. Endosomal acidification leads to iron release. The apotransferrin-receptor complex is then recycled to the cell surface with a return to neutral pH and the concomitant loss of affinity of apotransferrin for its receptor. Transferrin receptor is necessary for development of erythrocytes and the nervous system. Positively regulates T and B cell proliferation through iron uptake. Acts as a lipid sensor that regulates mitochondrial fusion by regulating activation of the JNK pathway. When dietary levels of stearate (C18:0) are low, promotes activation of the JNK pathway, resulting in HUWE1-mediated ubiquitination and subsequent degradation of the mitofusin MFN2 and inhibition of mitochondrial fusion. When dietary levels of stearate (C18:0) are high, TFRC stearoylation inhibits activation of the JNK pathway and thus degradation of the mitofusin MFN2. Mediates uptake of NICOL1 into fibroblasts where it may regulate extracellular matrix production. In Canis lupus familiaris (Dog), this protein is Transferrin receptor protein 1 (TFRC).